The following is a 273-amino-acid chain: Putative pyruvate, phosphate dikinase regulatory protein (273 aa).

149–156 (GPSRTSKT) contributes to the ADP binding site.

Belongs to the pyruvate, phosphate/water dikinase regulatory protein family. PDRP subfamily.

The catalysed reaction is N(tele)-phospho-L-histidyl/L-threonyl-[pyruvate, phosphate dikinase] + ADP = N(tele)-phospho-L-histidyl/O-phospho-L-threonyl-[pyruvate, phosphate dikinase] + AMP + H(+). The enzyme catalyses N(tele)-phospho-L-histidyl/O-phospho-L-threonyl-[pyruvate, phosphate dikinase] + phosphate + H(+) = N(tele)-phospho-L-histidyl/L-threonyl-[pyruvate, phosphate dikinase] + diphosphate. In terms of biological role, bifunctional serine/threonine kinase and phosphorylase involved in the regulation of the pyruvate, phosphate dikinase (PPDK) by catalyzing its phosphorylation/dephosphorylation. The sequence is that of Putative pyruvate, phosphate dikinase regulatory protein from Rickettsia rickettsii (strain Iowa).